A 237-amino-acid chain; its full sequence is MAPVRRILLKLSGEALMGPDSFGYHAGTMAGFVGQIRDVVALGVQVGIVVGGGNLFRGATGALAGMNRATADSMGMLATVMNALALKDALQQAGVAARVQTAVHIAHVGEGFERDAAVRELEAGRVVIFGGGTGNPFFTTDTAAALRAAEIDADLLLKATKVDGVYTADPNKDPDARRYDTLSFDEAIAKQLGVLDTAAFALCREQKLSLVVFNVFKPGALKRVVMGEDEGTRVSNH.

Residue 10–13 (KLSG) coordinates ATP. Glycine 52 lines the UMP pocket. 2 residues coordinate ATP: glycine 53 and arginine 57. UMP contacts are provided by residues aspartate 72 and 133 to 140 (TGNPFFTT). Positions 160, 166, and 169 each coordinate ATP.

The protein belongs to the UMP kinase family. In terms of assembly, homohexamer.

It is found in the cytoplasm. It carries out the reaction UMP + ATP = UDP + ADP. Its pathway is pyrimidine metabolism; CTP biosynthesis via de novo pathway; UDP from UMP (UMPK route): step 1/1. Its activity is regulated as follows. Inhibited by UTP. In terms of biological role, catalyzes the reversible phosphorylation of UMP to UDP. The chain is Uridylate kinase from Thiobacillus denitrificans (strain ATCC 25259 / T1).